A 6359-amino-acid polypeptide reads, in one-letter code: MKTKVEKIYPLSNMQKGMLFHAMKDEASHAYFEQFIIELKGDVDERMFEESLNEVMKRHEILRASFHHRLDEPLHVIIKDRHMKFDYLDIRGRHDQDGVLERYLAEDRQKGFDLAKDTLMRACLIRMSDDSYQFVWTYHHILLDGWCLGIILDELLTIYEMKRKGQNHQLEDPRPYSDYIKWLEDQDKEEAQSYWESYLSGYDQKNSLPKLRTPSETGFKRREKTIECSKELTNRLIKLANRNHVTINTVLQSIWGVILAKYNNSEDVVFGTVVSGRDAEVEGIETMVGVFINTIPTRIRLDKDKLFKDVLRQTQADALESSRYNYMNLAEVQALSELKNDLIDHVMVFENYAVDQKAFEEKNDVGFEMVNVSGEEQTNYHFSISAALDDQLKLLFIYDENVYDTTIIETLEKHIITVAEQVAEDETQTLRDINLVSKEEQHRILDTFNDTKTGYPKDKPLHELFEEQAMKTPDHTALVFGAQRMTYRELNEKANQTARLLREKGIGRGSIAAIIADRSFEMIIGIIGILKAGGAYLPIDPETPKHRIAFMLSDTKAGVLLAQGKAADGIDCEADIIHLDKGVADGFSKKRLSSVNDSGDTAYIIYTSGSTGMPKGVVTPHYSAARVVKNTNYIDITEDDAILQLSNYSFDGSVFDIFGALLNGASLVLIEKETVLNTHELAEVIKKEQVSVMFITTALFNTLADINIGCLAKLRKIFLGGERASIPHVRKVLNHVGRDKLIHVYGPTESTVYATYYFINEIDDEAETIPIGSPLANTSVLIMDEAGKLLPIGVPGELCIAGDGLSKGYLNREELTAEKFIPHPFIPGERLYKTGDLAKWLPDGNIEFIGRIDHQVKIRGFRIELGEIESRLEMHEDINETIVTVREDEESRPYICAYITANREISLDELKGFLGEKLPEYMIPAYFVKMDKLPLTKNGKVDRKALPEPDRTAGAENEYEAPRNETEEKLAAIWRDILKVEKSGINDHFFEMGGHSLKAAAMAARIRKELKAEIPLGQIFKTPTIKGLGEYIRSTKDSVYSSIQKVEEKEYYRLSSAQKRLYILDQIEGSGLSYNIPFTMKVKGRFDIRRFENALKTIIQRHEALRTSFLMADGEPVQKIEKEVDFSIKCSKIQSLSIQEIIKQFVRPFDLKKAPLFRTEVVKVDDEEHIILFDMHHIISDGASMGVLTKEICDLYGGKELKPLSLQYKDYSEWQRDFYQKDEMKRQKEYWLNIFKGEIPVLNMPTDYPRPQMHSVEGDRIGFAIDGELTKKLKRIAKDNGATMYMLLLAAYTVLLRTYSGQEDVIIGTPIQGRKHHELKHVIGMFVNTLAMRNHPKGDKTFAEYLQDVKETALKAYENQDYQFDDLVEQLDLERDMSRNPLFDTMFVLQNLEKADAEIEGLTFEPFESDIHISKFDLTLSAIEKDSKIEFDLEYCTKLFKRETVERMAAHFVRVLEDISKRTDKRLDQIEAMSEDEKNTLLYRFNDTKTDAPTDKTICQLFAERAETSPDKTAVVFEDQTLTYRQLHERSNQLARFLREKGVQPDTAVGIMVDRSPEMIIGLLGILKAGGAYLPLDPAYPEDRIKYILGDSQTKFLLSEEALIKKRAFIKEADMINIDIHDKQIAAQDAAQLEPVSRSGDLAYIIYTSGSTGKPKGVLIEQKGLSNLVSAVVKLMHLNTGSRVIQFASLSFDASAFEIFPALAAGSALVLGRQEEMMPGQPLTSFLRQYNITHATLPPTVLDVLNESGLENLKVIVSAGSACSEELAKRWSGNRLFINAYGPTETTVCATAGIYEGSGRPHIGSPIANTNVYVLDQNQKPVPTGVVGELCVGGMSLARGYLNRPELTAEKFISHPFASGERLYRTGDLARWLPDGHLEFLGRIDHQVKIRGYRIELGEIENQLLKLDKIDEAAVIARKDDDHSDYLCAYIVSKEDWTSTEISEWLEKELPHYMIPAYFVRLDKLPLTSNDKVDRKALPAPDRHVATGAVYEAPRNDTEAKLVDIWRDVLGAGDIGISHHFFAAGGDSIKALQIVSRLSRLGLKLEMKDLFANPRIKDLAKYVKKQSQRKNANTIVTGHAELTPIQKWYFANNKEELDHFNQSFVLFRKGGFDESCVKKAFNKIMEQHDALRMIYEEKGGDFIQYNRSFREDLFDLDVYDVRGLDRQAEKVYELATSIQKLSSIRKGKLVHLGIFRADEGDHLLIVIHHLVVDGVSWRILFEDFETLYSQALKGQTLEIGYKTDSYQEFARRLKAYAHSRTLSKEAEYWRNIAKARVRFIPPKNVLKEDVYENSTTLSIKLGKEATADLLRNTNRAYNTEINDILLTALLTGARDITGENKLKVMMEGHGREDILEGVDITRTIGWFTTMYPVLLDAGEEKALSQQIKMVKETLRKIPNKGIGYGLLKYMAEDPDFTNEEKARISFNYLGDIDADMNRGEFSGSSFSEGESIGGKIARSHSIEINAIVMNHELVIHTTFNQMEYEKDTISRLNHQLKERLEQIIKHCTQQTESERTPSDYGDTNISLAELEEIKGKYRSAIEKIYPLANMQKGMLFHAIEDHTSDAYFQQTVMDIEGYVDPAILEASFNDIMKRHEILRASYEYEIVEEPRQIIIENRSIDFTYFNIAKSSAQQQEMFIERLLNEDRKKGFDLSKDVLMRAYLLKTAERSYRLVWSHHHILLDGWCLGIIMRELFVIYENRMNGKASPLKETKPYSDYIKWLERQDQEEARQYWREYLKGYEEQAQLPTLTKRKKSSRYDRREKVIHLSKQLTKQLKELAAKNSVTLHTVIQTIWGLMLTRYTKIDDVVFGTVVSGREANVDGIEDMIGLFINTIPTRIRFNEQARFNDCLQKVQEDAIQSNRYNYMNLAEVQALSSLKKDLIDHILVFENYEADEQDFEESQMKTGFKVNEISAAEQSITAFSMSVTPGEELTLVLTYDGNVYDRDIINNIEGHIKRVAEQVTANENRKIAEIDMLAEEERKTLLYEFNRTNADYPRNKTIHQLFEEQAERTPGHTAVVFEKEELSYKALNERSNQLAGLLREKGVKPDMIVGVMAERSVEMIVGMLAVLKAGGAYLPIDPEYPEDRIRYMIEDSGISILLKKADKQIDVDFTCIDMNEKGLAKDMAAENLGHTSGSSDMAYVIYTSGSTGKPKGVMVNHQSIVNTLYWRKQSYGYSTADATLQVPSFSFDSSVEDIFTTLISGAKLVLIRDLRMNPREIIGVLRTHKATNLLAVPSFYLNLLDTIEQPLDDLRFVTVAGEGFNESLIRQHFEKLPNVKLFNEYGPTENSVCSTRGELRKDDEKVVIGRPISNHKVYILNHNQQLLPLGTPGELCLSGEGLARGYLNRPDLTLEKFVPNPFAPGESMYRTGDLARFLPDGQIEYLGRIDHQVKIRGFRIELGEIENQLLKIEGIDAAAVMAREDQAGGKYLCAYIVADKAAGVADVRKCLLKELPDYMVPSYFVKLDQLPLTANGKIDRKALPEPSSTISEATYEAPRNRTEEKLVSIWEDVLGIENIGISHNFFELGGHSLKAAALTAKLHKEMKIEVPLRQLFETPTIKDIGDFIESMKESPYASITQAEEKEYYALSSAQRRLYILNQIEPGGLSYNMPFAMKIAGDFDVDRFEDAFRQLIERHEALRTAFVMVDGEPVQKIEKEVDFKVKYGRLGQDPLEEKIKAFIKPFALEKAPLLRAEVLKASGDEHVLMLDMHHIISDGVSMAIFTRELAELYEGKTLPPLTIQYKDFSEWQKLFYQKDEVKRQEDYWLNVFQGEVPVLNLPADEKRPQKRSIEGDIVQFEIDGETSAMLNKLAKENGATMYMLLLAGYTTLLAKYTGQEDIVVGSPIAGRHHSDLKHVIGLFINTLAMRNHPKGDMPFADYLKEVKETALKAYENQDYPFDELVEKLDVKRDMSRHPLFDTMLVLQNFDGDEADIDGLTFQPLQTEVNISKFDLTLTAAETNEGIQCVFNYSTKLFKRSTIERMAGHLINILKEAANDPHMPLSDVNMLSDEEMNALLDQNQGKQADYPQDQTVHQLFEQQADKTPEQTAVVYADEKLTYRELNERANQLARLLRDKGADADQPVAIMIEPSLEMIISMLAVLKAGAAYVPIEPEQLAKRTNEILSDSRAAILLVKGSVKENVAFAGEIVNVADGLIDAKVASNLSASGSADQNAYIIYTSGSTGKPKGVFVRHGNVVNYTTWFMKEAGLTENDKAMLVSSYAFDLGYTSIFSALLSGSELHIARKECYTNAHRALKYIKENGITYIKLTPSLFNIFVNDPGFSAEKPCATLRLVVLGGEMINTRDVETFYNQYPDHVVMNHYGPTETTIGSVFKVIDPEHLDSFKECPVIGTPIHNTNAYVLDENMKLLPEGVYGELCIAGAGVTGGYVNRPDETKEKFIENPFAPHTKMYRTGDLARRLSDGNIELAGRIDTQVKVRGYRIEPEEIKNRLLAHDDIKEAFIAAREDHKGAKQLCAYFTADAELPFEDIRTYLMHELPEYMIPSSFVQIEKMPLSANGKIDTAALPEPQPGKETEYEPPRNETEEKLVQIWEEVLGIDKIGITHHFFAAGGDSIKALQMISRLSREGLSLEMKDLFANPQIKSLSRYVKAESDKSASYETVEGEVLLTPIQQEYFSLNKTDRNHYNHAVMLYRKNGFDESIVKRVFKEIIKHHDALRTVFTEEDGKIIQYNRGPDKQLFDLFVYDVSSENDQPQKVYQLATELQQSIDIETGPLVKLAVFKTNNGDHLLIIIHHLVVDGISWRILFEDLAIGYSQLANGEKVEFYPKTASYQAYARHIAEYAKSVKLLSEKQYWLKAIAEGVEFLDMNENAGAFKVEDSRTFSTELEKEETKRLLRETNRAYHTEINDILITALLVAARDMNGQNQLRITLEGHGREQVADGIDISRTVGWFTSKYPVFIDLGQETDMSRTIKMVKEHLRNVPNKGIGYGILKYLTRDSEIAKGAASPILFNYLGQLDEDINSGEFSSSHLSPGEAAGKGITREHPLEINAVVFRGKLAIQTTYNTRAYSEDVVRAFAQNYKEALKAVIRHCAEREETEKTPSDYGDKGISLDQLEEIKLKYKGMEIEKIYPLANMQRGMLFHALEDKESQAYFEQMAINMKGLIDERLFAETFNDIMERHEILRASIEYEITDEPRNVIIKDRKINLDYHDLRKQSPAEREQVIQAYRKADREKGFRLNSEPLIRAALMRTEDDSYTFIWTNHHILLDGWSRGIIMGELFHMYHMKEARQKHRLEEARPYSDYIGWLQQQDKEAAKAYWRNYLSGFTEKSPISVLAGSSGHAKYKRKEAVIEFPEQLTGRITELASRNNVTFHTVLQCIWGMLLARYNQTDDVVFGTVISGRDAQVTGIEKMVGLFINTVPTRIRLDKSQSFKELIKSVQEQALEGRTYHDMNLSEVQSLSELKRELLDHILIFENYAVDQSAFETSGKRGAGFVFEEIHAEEQTNYGFNIVAVPGERLVIKLTYDGNIYHDHIIAGIKGHLQQVMEQVVQHEDQSLNDITVLSEAERNRLLYEWNDTKAEYPNQTIHRLFEEQAEKTPELAAVVSGNDKLTYRELNEKSNQLARYLRDKGVKADTIVAIMAERSPEMVVGIMGILKAGGAYLPIDPDYPEERIKYMLEDSGAAIILADHKQDLGTLHQEAVELTGDFSSYPADNLEPAGNADSLAYIIYTSGSTGKPKGVMIRQRGLVNYITWADRVYVQGEQLDFALYSSIAFDLTVTSIFTPLISGNRVIVYRHSEDGEPLIRKVFRDQKAGIVKLTPSHLSLVKDMDASGSSIKRLIVGGEDLKTELAKEITERFHHNIEIYNEYGPTETVVGCMIYQYDAGWDRQVSVPIGKPASNVQLYILDERQEVQPVGIAGELYISGDGVAKGYLNKPELTSEKFLPNPFLPGERMYRTGDLAKMRPDGHIEYLGRIDHQVKIRGYRIELGEIEHQLLRHSDIKEAAVAAKTDQNNDQVLCAYVVSERDITQKDIKTFLAKELPEYMVPSYLLKLDELPLTPNGKVDLKALPEPDRSAGALLEYEPPRHELEEKMAAIWEDILNIEQIGINANIFDIGANSLNVMSFVSRLYAELGFRVPFKDIFSKPTIKELSDFLKHAQDLLKDYTDDCMQLTRAEEGGKNLFCFPPAASMGIAYMGLAKHLKQHSVYSFNFIPSANRIRKYADIIKNIQGEGPYTLIGYSSGGILAFDVAKELNRQGYEVEDLIIIDSKYRTKAEKHQFTEEEYREEISKTFELEKYRDVEKLLSDYLVDLVMKSYVYIQNTVTTGAIDGHISYIKSSDNQRGENMMMWEKATSKTFTVVQGAGTHMQMISKSHPDILERNARLIHDIINKTVKI.

Positions 461 to 1034 (LHELFEEQAM…IKGLGEYIRS (574 aa)) are domain 1 (isoleucine-activating). Basic and acidic residues predominate over residues 941–953 (VDRKALPEPDRTA). A disordered region spans residues 941–962 (VDRKALPEPDRTAGAENEYEAP). 5 Carrier domains span residues 961-1036 (APRN…RSTK), 1993-2067 (APRN…KKQS), 3497-3572 (APRN…ESMK), 4539-4613 (PPRN…KAES), and 6047-6122 (PPRH…KHAQ). An O-(pantetheine 4'-phosphoryl)serine mark is found at serine 996, serine 2028, and serine 3532. The domain 2 (D-phenylalanine-activating) stretch occupies residues 1517–2064 (FEDQTLTYRQ…RIKDLAKYVK (548 aa)). Positions 2999-3570 (NKTIHQLFEE…IKDIGDFIES (572 aa)) are domain 3 (histidine-activating). A domain 4 (D-aspartic acid-activating) region spans residues 4047–4612 (EQTAVVYADE…KSLSRYVKAE (566 aa)). The segment at 4521-4544 (IDTAALPEPQPGKETEYEPPRNET) is disordered. The segment covering 4531-4544 (PGKETEYEPPRNET) has biased composition (basic and acidic residues). O-(pantetheine 4'-phosphoryl)serine occurs at positions 4574 and 6082. The tract at residues 5549 to 6129 (IHRLFEEQAE…HAQDLLKDYT (581 aa)) is domain 5 (asparagine-activating).

Belongs to the ATP-dependent AMP-binding enzyme family. Large multienzyme complex of BA1, BA2 and BA3. It depends on pantetheine 4'-phosphate as a cofactor.

The enzyme catalyses L-aspartate = D-aspartate. It carries out the reaction L-phenylalanine + ATP + H2O = D-phenylalanine + AMP + diphosphate + H(+). The protein operates within antibiotic biosynthesis; bacitracin biosynthesis. Its function is as follows. Induces peptide synthesis, activates and incorporates five amino acids, forms a thiazoline ring between the first two amino acids and incorporates a D-glutamine in the fourth position. This is Bacitracin synthase 3 (bacC) from Bacillus licheniformis.